A 1438-amino-acid chain; its full sequence is Pyochelin synthetase PchE (1438 aa).

Residues 6-85 form the Carrier 1 domain; sequence DSRTALRDWL…AWLDLLACAD (80 aa). Position 46 is an O-(pantetheine 4'-phosphoryl)serine (S46). The segment at 136–442 is condensation/cyclization; it reads RTRDVDPQRL…ARRQGQPRSA (307 aa). The adenylation stretch occupies residues 563–950; it reads RAAEAPDADA…GRVDQQVKVR (388 aa). Positions 1350–1425 constitute a Carrier 2 domain; the sequence is EPLEAHEQAL…GLARHLQVQT (76 aa). S1385 bears the O-(pantetheine 4'-phosphoryl)serine mark.

It belongs to the NRP synthetase family. Pantetheine 4'-phosphate serves as cofactor.

The catalysed reaction is holo-[peptidyl-carrier protein] + L-cysteine + ATP = L-cysteinyl-[peptidyl-carrier protein] + AMP + diphosphate. It functions in the pathway siderophore biosynthesis. The protein operates within antifungal biosynthesis. Its function is as follows. Involved in the biosynthesis of the siderophore pyochelin. Accepts salicylate activated by PchD at the first peptidyl carrier domain (ArCP), and activates and fixes one molecule of cysteine at the second peptidyl carrier domain (PCP1) via a thioester linkage to the phosphopanthetheine moiety. Then catalyzes the condensation reaction between the salicylate bound to the first site and the cysteine bound to the second site, and the cyclization of the cysteine to form the salicyl-thiazolinyl-S-PCP1 intermediate at the second site. When this intermediate is released by the action of a thioesterase, it produces the antifungal antibiotic dihydroaeruginoic acid (Dha or hydroxyphenyl-thiazolinyl-carboxylate). This is Pyochelin synthetase PchE from Pseudomonas aeruginosa (strain ATCC 15692 / DSM 22644 / CIP 104116 / JCM 14847 / LMG 12228 / 1C / PRS 101 / PAO1).